The sequence spans 119 residues: Large ribosomal subunit protein bL20 (119 aa).

This sequence belongs to the bacterial ribosomal protein bL20 family.

In terms of biological role, binds directly to 23S ribosomal RNA and is necessary for the in vitro assembly process of the 50S ribosomal subunit. It is not involved in the protein synthesizing functions of that subunit. The sequence is that of Large ribosomal subunit protein bL20 from Laribacter hongkongensis (strain HLHK9).